The sequence spans 375 residues: Killer cell immunoglobulin-like receptor 2DL5A (375 aa).

The first 21 residues, 1–21 (MSLMVISMACVGFFLLQGAWT), serve as a signal peptide directing secretion. The Extracellular segment spans residues 22–238 (HEGGQDKPLL…PSSKTGIRRH (217 aa)). Ig-like C2-type domains follow at residues 42–102 (GGHV…HPRS) and 137–200 (GENV…LHDS). A disulfide bond links cysteine 49 and cysteine 95. 3 N-linked (GlcNAc...) asparagine glycosylation sites follow: asparagine 139, asparagine 173, and asparagine 218. A disulfide bond links cysteine 144 and cysteine 193. The disordered stretch occupies residues 213 to 233 (VSVTGNSSSSSSSPTEPSSKT). The segment covering 219–231 (SSSSSSSPTEPSS) has biased composition (low complexity). A helical transmembrane segment spans residues 239 to 259 (LHILIGTSVAIILFIILFFFL). At 260–375 (LHCCCSNKKN…ASSHVPAAGI (116 aa)) the chain is on the cytoplasmic side. The segment at 334 to 375 (AKPRSLSPAHKHHSQALRGSSRETTALSQNRVASSHVPAAGI) is disordered. Over residues 355 to 366 (RETTALSQNRVA) the composition is skewed to polar residues.

Belongs to the immunoglobulin superfamily.

The protein resides in the cell membrane. Receptor on natural killer (NK) cells for HLA-C alleles. Inhibits the activity of NK cells thus preventing cell lysis. The protein is Killer cell immunoglobulin-like receptor 2DL5A (KIR2DL5A) of Homo sapiens (Human).